The chain runs to 202 residues: Peptide methionine sulfoxide reductase B1, chloroplastic (202 aa).

Residues M1–Q63 constitute a chloroplast transit peptide. A disordered region spans residues Y48 to K67. Positions E75 to L197 constitute a MsrB domain. Residues C114, C117, C163, and C166 each coordinate Zn(2+). C186 serves as the catalytic Nucleophile.

Belongs to the MsrB Met sulfoxide reductase family. Zn(2+) is required as a cofactor. Expressed at low levels in stems, leaves, floral buds, flowers and siliques (at protein level).

The protein resides in the plastid. Its subcellular location is the chloroplast. It carries out the reaction L-methionyl-[protein] + [thioredoxin]-disulfide + H2O = L-methionyl-(R)-S-oxide-[protein] + [thioredoxin]-dithiol. In terms of biological role, catalyzes the reduction of methionine sulfoxide (MetSO) to methionine in proteins. Specifically reduces the MetSO R-enantiomer. Plays a protective role against oxidative stress by restoring activity to proteins that have been inactivated by methionine oxidation. May play an essential function in association with MSRB2 in maintaining vegetative growth during environmental constraints, through the preservation of photosynthetic antennae. MSRB1 and MSRB2 account for most of the leaf peptide MSR capacity. The sequence is that of Peptide methionine sulfoxide reductase B1, chloroplastic from Arabidopsis thaliana (Mouse-ear cress).